The sequence spans 196 residues: GTP cyclohydrolase 1 (196 aa).

Cysteine 85, histidine 88, and cysteine 156 together coordinate Zn(2+).

This sequence belongs to the GTP cyclohydrolase I family. Toroid-shaped homodecamer, composed of two pentamers of five dimers.

The enzyme catalyses GTP + H2O = 7,8-dihydroneopterin 3'-triphosphate + formate + H(+). Its pathway is cofactor biosynthesis; 7,8-dihydroneopterin triphosphate biosynthesis; 7,8-dihydroneopterin triphosphate from GTP: step 1/1. The sequence is that of GTP cyclohydrolase 1 from Bacteroides thetaiotaomicron (strain ATCC 29148 / DSM 2079 / JCM 5827 / CCUG 10774 / NCTC 10582 / VPI-5482 / E50).